The primary structure comprises 234 residues: Heme-copper oxidase subunit 2 (234 aa).

A run of 2 helical transmembrane segments spans residues 13–33 (LFLLFTAVGVLAAGTVTAFFI) and 72–92 (LLFVTGIIVMGLIVATIDETL). Positions 151, 188, 192, and 196 each coordinate Cu cation.

It belongs to the cytochrome c oxidase subunit 2 family.

Its subcellular location is the cell membrane. The polypeptide is Heme-copper oxidase subunit 2 (aoxA) (Aeropyrum pernix (strain ATCC 700893 / DSM 11879 / JCM 9820 / NBRC 100138 / K1)).